Reading from the N-terminus, the 427-residue chain is Lactadherin (427 aa).

The N-terminal stretch at methionine 1–alanine 18 is a signal peptide. EGF-like domains follow at residues serine 20–asparagine 59 and glutamate 62–glutamate 106. Intrachain disulfides connect cysteine 24–cysteine 35, cysteine 29–cysteine 47, and cysteine 49–cysteine 58. An O-linked (Fuc...) serine; in PAS-6 glycan is attached at serine 27. The O-linked (Fuc...) threonine; in PAS-7 glycan is linked to threonine 34. N-linked (GlcNAc...) (hybrid) asparagine; in PAS-6 and PAS-7 glycosylation is present at asparagine 59. 6 cysteine pairs are disulfide-bonded: cysteine 66–cysteine 77, cysteine 71–cysteine 94, cysteine 96–cysteine 105, cysteine 109–cysteine 265, cysteine 252–cysteine 256, and cysteine 270–cysteine 427. Residues arginine 85–aspartate 87 carry the Cell attachment site motif. 2 consecutive F5/8 type C domains span residues cysteine 109 to cysteine 265 and cysteine 270 to cysteine 427. An N-linked (GlcNAc...) (high mannose) asparagine; in PAS-6 glycan is attached at asparagine 227.

Post-translationally, the two O-linked glycans consist of Gal, GlcNAc and Fuc, with probably Fuc as reducing terminal sugar. Milk and spermatozoan. Also present in epididymis, kidney, heart, lymphatic gland and spleen but not esophagus, small intestine, muscle and liver.

The protein resides in the membrane. Its subcellular location is the secreted. It localises to the cytoplasmic vesicle. It is found in the secretory vesicle. The protein localises to the acrosome membrane. Its function is as follows. Contributes to phagocytic removal of apoptotic cells in many tissues. Plays an important role in the maintenance of intestinal epithelial homeostasis and the promotion of mucosal healing. Promotes VEGF-dependent neovascularization. Specific ligand for the alpha-v/beta-3 and alpha-v/beta-5 receptors. Also binds to phosphatidylserine-enriched cell surfaces in a receptor-independent manner. Zona pellucida-binding protein which may play a role in gamete interaction. The sequence is that of Lactadherin (MFGE8) from Bos taurus (Bovine).